A 566-amino-acid polypeptide reads, in one-letter code: MTAETNTNKHPLYIPYAGYTLLELPLLNKGSAFTQEERSHFNLHGLIPHVIETIEEQSQRSYQQYGAFNDDINKHIYLRNIQDTNETLFYRLINDHLEEMMPIIYTPTVGEACQRFSDIYRRHRGIFISYPDREHIDDILQNVSKRNVKVIVITDGERILGLGDQGIGGMGIPIGKLSLYTACGGISPAYTLPITIDVGTNNQQLLNDPIYMGWRQPRISGDEYYEFIDQVLTGIRRRWPHALIQFEDFAQKNAMPLLTKYRDKFCCFNDDIQGTAAVSVGSLIAASRAAGKQLKDQTITFLGAGSAGCGIAEQIVAQMVAEGLTDAQARARVYMVDRFGLITENQPNLLDFQRKLAQKAEVVSDWGNVEEVISLLDVVKNAKPTVLIGVSGQPGLFTEEVIRTLAENCERPIVMPLSNPTSRVEALPSDVIQWTNGRALIATGSPFAPVNYQGKLYNISQCNNSYIFPGIGLGVIASGAKRVTDNMLMASSNALADCSPLLQNPNADLLPAIADIQDVSKRIAFKVAKAAIEDGVALNMSDEVLLQNIEKEFWKPKYRGYKRVPF.

Y105 functions as the Proton donor in the catalytic mechanism. R158 contacts NAD(+). Catalysis depends on K176, which acts as the Proton acceptor. E247, D248, and D271 together coordinate a divalent metal cation. Positions 271 and 419 each coordinate NAD(+).

Belongs to the malic enzymes family. In terms of assembly, homotetramer. Mg(2+) serves as cofactor. It depends on Mn(2+) as a cofactor.

The catalysed reaction is (S)-malate + NAD(+) = pyruvate + CO2 + NADH. The enzyme catalyses oxaloacetate + H(+) = pyruvate + CO2. The protein is NAD-dependent malic enzyme of Acinetobacter baylyi (strain ATCC 33305 / BD413 / ADP1).